The primary structure comprises 1023 residues: MDAQIEKAIEIAWDPRSDPNLKEQAVQYLTQVRGDTSSLQACLNLFTRAPKAAEVVRLVSLDIVNNAIQTQHIDDQSLRGLKEQLHDYVRRTYASGNEVDPPALQNKLTQTLTFLFSSLYKEGWESFIRDFLSFAGHQNGSVDNLSGVVLYLRLLSSIHDEIADLMIARAGEETKRNVELKDLVRARDVHTVAASFQQILTYWQGNNDAIVEMTLKVIGKWVSWIDISLVVNQDILNLLFPLVGRNPNGGEDKVKDAAIDCFTEIVAKKMKPSDKIGMILFLNLGEVVSQLISSPALHDLRNTSSYDTDLAEAVAKLVNNVVSDLVKILEDAKVEPDVRAQAEQLLQTFLPLLLRFFSDEYDEICATVIPSLTELNTFLRKAQPLPPAYSAMLTPILNAIIQKMRYDDTSSYADEDELTDEAEFQELRKRLQVLQKTIAAVDEALYVDVLSNVIGSTFQRLDEQNGQIDWRDLDLALHEMYLFGELTLVNGGLYAKSQPSSIAAERLIVMMSKMVESGIASFNHPAISLQYMEICVRYCSFFENQTQYIPQVLEQFVSFVHHSHSRVRIRSWYLFHRFVKHLRGQVGNVAETIIQSISDLLPLKAEVPRENDDDMSSDDGNHDAADVAFNAQLNLYEAIGCISSTTSTPIEKQAIYARTIMDPLFSDIERNLEQAKSGNAQATLQIHHIIFALGSLAHGFSDWSPGEGKRAGQAPVKEITIEFSRAAEAILFALEALKASFEVRNAARSSFSRLMGVMGVAMLPLLPRWIDGLLSQSSSKEEIAMFLRLLDQVVFGFKKDIHEVLNSLLTPLFQRVFASLSEPVTGTDDGIQLAELRREYLTFVTVILNNELGSVLVSEQNQAFFDPLIQSVTSLAKTVTNENGNLAASKIAFNVMTKMAEIWGGPTIATPGQPITSPVPSQPTFPGFDSFLIERFHPVCWEVLRDPNFRPLVDAQSKSVLNELAGLEQAIYMKTGNMFVEHLQGNFFPSMGVDGSGFIKSMVESPERKGLATFLQNWMKGKA.

It belongs to the exportin family.

It is found in the nucleus. Its subcellular location is the cytoplasm. Functionally, tRNA nucleus export receptor which facilitates tRNA translocation across the nuclear pore complex. Involved in pre-tRNA splicing, probably by affecting the interaction of pre-tRNA with splicing endonuclease. The chain is Exportin-T (los1) from Botryotinia fuckeliana (strain B05.10) (Noble rot fungus).